We begin with the raw amino-acid sequence, 342 residues long: Ribosomal RNA small subunit methyltransferase C (342 aa).

This sequence belongs to the methyltransferase superfamily. RsmC family. As to quaternary structure, monomer.

The protein resides in the cytoplasm. The enzyme catalyses guanosine(1207) in 16S rRNA + S-adenosyl-L-methionine = N(2)-methylguanosine(1207) in 16S rRNA + S-adenosyl-L-homocysteine + H(+). In terms of biological role, specifically methylates the guanine in position 1207 of 16S rRNA in the 30S particle. The sequence is that of Ribosomal RNA small subunit methyltransferase C from Salmonella newport (strain SL254).